The primary structure comprises 573 residues: Urease subunit alpha (573 aa).

In terms of domain architecture, Urease spans 136–573; it reads GAIDCHVHLI…LPMAQRYFLF (438 aa). Ni(2+) contacts are provided by His141, His143, and Lys224. Lys224 bears the N6-carboxylysine mark. Residue His226 participates in substrate binding. Ni(2+) contacts are provided by His253 and His279. The active-site Proton donor is His327. Asp367 contacts Ni(2+).

The protein belongs to the metallo-dependent hydrolases superfamily. Urease alpha subunit family. As to quaternary structure, heterotrimer of UreA (gamma), UreB (beta) and UreC (alpha) subunits. Three heterotrimers associate to form the active enzyme. It depends on Ni cation as a cofactor. Carboxylation allows a single lysine to coordinate two nickel ions.

The protein resides in the cytoplasm. It catalyses the reaction urea + 2 H2O + H(+) = hydrogencarbonate + 2 NH4(+). The protein operates within nitrogen metabolism; urea degradation; CO(2) and NH(3) from urea (urease route): step 1/1. This is Urease subunit alpha from Mycobacterium sp. (strain JLS).